A 60-amino-acid polypeptide reads, in one-letter code: Regulatory protein DegR (60 aa).

Functionally, stabilizes the phosphorylated form of DegU, leading to enhanced production of levansucrase, alkaline protease, and neutral protease. The polypeptide is Regulatory protein DegR (degR) (Bacillus subtilis subsp. natto).